The sequence spans 1386 residues: DNA-directed RNA polymerase subunit beta' (1386 aa).

The Zn(2+) site is built by Cys75, Cys77, Cys90, and Cys93. Positions 466, 468, and 470 each coordinate Mg(2+). Cys809, Cys883, Cys890, and Cys893 together coordinate Zn(2+).

Belongs to the RNA polymerase beta' chain family. As to quaternary structure, the RNAP catalytic core consists of 2 alpha, 1 beta, 1 beta' and 1 omega subunit. When a sigma factor is associated with the core the holoenzyme is formed, which can initiate transcription. It depends on Mg(2+) as a cofactor. The cofactor is Zn(2+).

It carries out the reaction RNA(n) + a ribonucleoside 5'-triphosphate = RNA(n+1) + diphosphate. DNA-dependent RNA polymerase catalyzes the transcription of DNA into RNA using the four ribonucleoside triphosphates as substrates. This is DNA-directed RNA polymerase subunit beta' from Oleidesulfovibrio alaskensis (strain ATCC BAA-1058 / DSM 17464 / G20) (Desulfovibrio alaskensis).